A 797-amino-acid chain; its full sequence is Phenylalanine--tRNA ligase beta subunit (797 aa).

Positions 40 to 154 (MEGLSKLVVG…ADAKVGDSIF (115 aa)) constitute a tRNA-binding domain. Residues 407 to 482 (PILPKVSITL…RIYGYDNLPS (76 aa)) enclose the B5 domain. Residues Asp460, Asp466, Glu469, and Glu470 each coordinate Mg(2+). In terms of domain architecture, FDX-ACB spans 704–797 (PKVQAVHRDI…LVEKLDIEIR (94 aa)).

It belongs to the phenylalanyl-tRNA synthetase beta subunit family. Type 1 subfamily. In terms of assembly, tetramer of two alpha and two beta subunits. The cofactor is Mg(2+).

The protein resides in the cytoplasm. The enzyme catalyses tRNA(Phe) + L-phenylalanine + ATP = L-phenylalanyl-tRNA(Phe) + AMP + diphosphate + H(+). The sequence is that of Phenylalanine--tRNA ligase beta subunit from Lactococcus lactis subsp. lactis (strain IL1403) (Streptococcus lactis).